A 414-amino-acid chain; its full sequence is Gamma-glutamyl phosphate reductase (414 aa).

It belongs to the gamma-glutamyl phosphate reductase family.

The protein localises to the cytoplasm. It carries out the reaction L-glutamate 5-semialdehyde + phosphate + NADP(+) = L-glutamyl 5-phosphate + NADPH + H(+). It functions in the pathway amino-acid biosynthesis; L-proline biosynthesis; L-glutamate 5-semialdehyde from L-glutamate: step 2/2. Functionally, catalyzes the NADPH-dependent reduction of L-glutamate 5-phosphate into L-glutamate 5-semialdehyde and phosphate. The product spontaneously undergoes cyclization to form 1-pyrroline-5-carboxylate. The polypeptide is Gamma-glutamyl phosphate reductase (Thermoanaerobacter sp. (strain X514)).